Consider the following 445-residue polypeptide: Trigger factor (445 aa).

A PPIase FKBP-type domain is found at 168–253 (GDAVIVDFVG…IHEVRAPQTP (86 aa)).

Belongs to the FKBP-type PPIase family. Tig subfamily.

It is found in the cytoplasm. The enzyme catalyses [protein]-peptidylproline (omega=180) = [protein]-peptidylproline (omega=0). In terms of biological role, involved in protein export. Acts as a chaperone by maintaining the newly synthesized protein in an open conformation. Functions as a peptidyl-prolyl cis-trans isomerase. The protein is Trigger factor of Hyphomonas neptunium (strain ATCC 15444).